Here is a 277-residue protein sequence, read N- to C-terminus: Large ribosomal subunit protein uL2m (277 aa).

Residues 225 to 263 (AMNPVDHPHGGGEGKTSGGRPSVTPWSWPTKGQPTRSKR) are disordered. The span at 248–259 (TPWSWPTKGQPT) shows a compositional bias: polar residues.

The protein belongs to the universal ribosomal protein uL2 family.

The protein localises to the mitochondrion. This chain is Large ribosomal subunit protein uL2m (RPL2), found in Reclinomonas americana.